A 206-amino-acid chain; its full sequence is Cytochrome c biogenesis ATP-binding export protein CcmA (206 aa).

An ABC transporter domain is found at 3-206; that stretch reads VSVDDLCVTR…LAGASDEAFL (204 aa). ATP is bound at residue 35-42; that stretch reads GPNGSGKT.

This sequence belongs to the ABC transporter superfamily. CcmA exporter (TC 3.A.1.107) family. The complex is composed of two ATP-binding proteins (CcmA) and two transmembrane proteins (CcmB).

The protein resides in the cell inner membrane. The catalysed reaction is heme b(in) + ATP + H2O = heme b(out) + ADP + phosphate + H(+). Functionally, part of the ABC transporter complex CcmAB involved in the biogenesis of c-type cytochromes; once thought to export heme, this seems not to be the case, but its exact role is uncertain. Responsible for energy coupling to the transport system. In Roseobacter denitrificans (strain ATCC 33942 / OCh 114) (Erythrobacter sp. (strain OCh 114)), this protein is Cytochrome c biogenesis ATP-binding export protein CcmA.